A 108-amino-acid chain; its full sequence is Phosphoribosyl-ATP pyrophosphatase (108 aa).

Residues 88–108 (VENELDRREGRSGIEEKASRK) form a disordered region. Basic and acidic residues predominate over residues 91-108 (ELDRREGRSGIEEKASRK).

It belongs to the PRA-PH family.

The protein localises to the cytoplasm. It carries out the reaction 1-(5-phospho-beta-D-ribosyl)-ATP + H2O = 1-(5-phospho-beta-D-ribosyl)-5'-AMP + diphosphate + H(+). It functions in the pathway amino-acid biosynthesis; L-histidine biosynthesis; L-histidine from 5-phospho-alpha-D-ribose 1-diphosphate: step 2/9. This is Phosphoribosyl-ATP pyrophosphatase from Paracoccus denitrificans (strain Pd 1222).